Consider the following 339-residue polypeptide: DNA-directed RNA polymerase subunit alpha (339 aa).

An alpha N-terminal domain (alpha-NTD) region spans residues 1-235 (MVREEVAVST…DLFIPFLHGE (235 aa)). Residues 267 to 339 (KAIALECIFI…FTIDLPKNKF (73 aa)) form an alpha C-terminal domain (alpha-CTD) region.

Belongs to the RNA polymerase alpha chain family. In terms of assembly, in plastids the minimal PEP RNA polymerase catalytic core is composed of four subunits: alpha, beta, beta', and beta''. When a (nuclear-encoded) sigma factor is associated with the core the holoenzyme is formed, which can initiate transcription.

It is found in the plastid. Its subcellular location is the chloroplast. It catalyses the reaction RNA(n) + a ribonucleoside 5'-triphosphate = RNA(n+1) + diphosphate. Its function is as follows. DNA-dependent RNA polymerase catalyzes the transcription of DNA into RNA using the four ribonucleoside triphosphates as substrates. This Drimys granadensis protein is DNA-directed RNA polymerase subunit alpha.